Consider the following 166-residue polypeptide: Crossover junction endodeoxyribonuclease RuvC (166 aa).

Active-site residues include Asp11, Glu70, and Asp142. Asp11, Glu70, and Asp142 together coordinate Mg(2+).

This sequence belongs to the RuvC family. In terms of assembly, homodimer which binds Holliday junction (HJ) DNA. The HJ becomes 2-fold symmetrical on binding to RuvC with unstacked arms; it has a different conformation from HJ DNA in complex with RuvA. In the full resolvosome a probable DNA-RuvA(4)-RuvB(12)-RuvC(2) complex forms which resolves the HJ. It depends on Mg(2+) as a cofactor.

The protein resides in the cytoplasm. It carries out the reaction Endonucleolytic cleavage at a junction such as a reciprocal single-stranded crossover between two homologous DNA duplexes (Holliday junction).. Functionally, the RuvA-RuvB-RuvC complex processes Holliday junction (HJ) DNA during genetic recombination and DNA repair. Endonuclease that resolves HJ intermediates. Cleaves cruciform DNA by making single-stranded nicks across the HJ at symmetrical positions within the homologous arms, yielding a 5'-phosphate and a 3'-hydroxyl group; requires a central core of homology in the junction. The consensus cleavage sequence is 5'-(A/T)TT(C/G)-3'. Cleavage occurs on the 3'-side of the TT dinucleotide at the point of strand exchange. HJ branch migration catalyzed by RuvA-RuvB allows RuvC to scan DNA until it finds its consensus sequence, where it cleaves and resolves the cruciform DNA. This chain is Crossover junction endodeoxyribonuclease RuvC, found in Nitratidesulfovibrio vulgaris (strain ATCC 29579 / DSM 644 / CCUG 34227 / NCIMB 8303 / VKM B-1760 / Hildenborough) (Desulfovibrio vulgaris).